Here is a 208-residue protein sequence, read N- to C-terminus: NAD(P)H dehydrogenase (quinone) (208 aa).

A Flavodoxin-like domain is found at 4–199 (VNVIFHSIHG…AMARYQGRHV (196 aa)). FMN is bound by residues 10-15 (SIHGHT) and 87-89 (TRY). Trp-107 contacts substrate. Residues 122 to 128 (SSGTQHG) and His-143 contribute to the FMN site.

It belongs to the WrbA family. The cofactor is FMN.

It carries out the reaction a quinone + NADH + H(+) = a quinol + NAD(+). The enzyme catalyses a quinone + NADPH + H(+) = a quinol + NADP(+). This is NAD(P)H dehydrogenase (quinone) from Methanosarcina barkeri (strain Fusaro / DSM 804).